A 264-amino-acid polypeptide reads, in one-letter code: Indole-3-glycerol phosphate synthase (264 aa).

The protein belongs to the TrpC family.

The enzyme catalyses 1-(2-carboxyphenylamino)-1-deoxy-D-ribulose 5-phosphate + H(+) = (1S,2R)-1-C-(indol-3-yl)glycerol 3-phosphate + CO2 + H2O. It participates in amino-acid biosynthesis; L-tryptophan biosynthesis; L-tryptophan from chorismate: step 4/5. This chain is Indole-3-glycerol phosphate synthase, found in Xylella fastidiosa (strain 9a5c).